Consider the following 413-residue polypeptide: Arginine biosynthesis bifunctional protein ArgJ (413 aa).

Positions 158, 184, 195, 285, 408, and 413 each coordinate substrate. Catalysis depends on threonine 195, which acts as the Nucleophile.

It belongs to the ArgJ family. In terms of assembly, heterotetramer of two alpha and two beta chains.

The protein resides in the cytoplasm. The catalysed reaction is N(2)-acetyl-L-ornithine + L-glutamate = N-acetyl-L-glutamate + L-ornithine. It carries out the reaction L-glutamate + acetyl-CoA = N-acetyl-L-glutamate + CoA + H(+). It functions in the pathway amino-acid biosynthesis; L-arginine biosynthesis; L-ornithine and N-acetyl-L-glutamate from L-glutamate and N(2)-acetyl-L-ornithine (cyclic): step 1/1. The protein operates within amino-acid biosynthesis; L-arginine biosynthesis; N(2)-acetyl-L-ornithine from L-glutamate: step 1/4. Its function is as follows. Catalyzes two activities which are involved in the cyclic version of arginine biosynthesis: the synthesis of N-acetylglutamate from glutamate and acetyl-CoA as the acetyl donor, and of ornithine by transacetylation between N(2)-acetylornithine and glutamate. This Brucella suis biovar 1 (strain 1330) protein is Arginine biosynthesis bifunctional protein ArgJ.